Consider the following 506-residue polypeptide: Epstein-Barr nuclear antigen leader protein (506 aa).

Disordered regions lie at residues 1 to 470 (MGDR…PRPP) and 485 to 506 (FEPP…EDED). A Phosphoserine; by host modification is found at serine 35.

Belongs to the lymphocryptovirus EBNA-LP family. Homooligomer. Interacts with host SP100; this interaction is important for EBNA-LP coactivator activity. Interacts with host HAX1, ERR1 and HSPA2. Interacts with host PRKDC and AKAP8L; these interactions modulate the coactivator function of EBNA-LP. In terms of processing, phosphorylated by the cellular protein kinase cdc2.

The protein resides in the host nucleus. Functionally, plays an important role in the establishment of B-cell immortalization by acting as an EBNA2 coactivator. This transcriptional activation preferentially enhances the expression of the major viral protein LMP1. The interaction between EBNA-LP and host SP100 correlates with coactivation of EBNA2 and the relocalization of SP100 from PML nuclear bodies into nucleoplasm. The polypeptide is Epstein-Barr nuclear antigen leader protein (EBNA-LP) (Epstein-Barr virus (strain B95-8) (HHV-4)).